The sequence spans 331 residues: Tetraacyldisaccharide 4'-kinase (331 aa).

60–67 is a binding site for ATP; that stretch reads TVGGTGKT.

It belongs to the LpxK family.

It carries out the reaction a lipid A disaccharide + ATP = a lipid IVA + ADP + H(+). The protein operates within glycolipid biosynthesis; lipid IV(A) biosynthesis; lipid IV(A) from (3R)-3-hydroxytetradecanoyl-[acyl-carrier-protein] and UDP-N-acetyl-alpha-D-glucosamine: step 6/6. In terms of biological role, transfers the gamma-phosphate of ATP to the 4'-position of a tetraacyldisaccharide 1-phosphate intermediate (termed DS-1-P) to form tetraacyldisaccharide 1,4'-bis-phosphate (lipid IVA). The protein is Tetraacyldisaccharide 4'-kinase of Pseudomonas syringae pv. syringae (strain B728a).